The following is a 245-amino-acid chain: 8-amino-3,8-dideoxy-manno-octulosonate cytidylyltransferase (245 aa).

This sequence belongs to the KdsB family.

It localises to the cytoplasm. The catalysed reaction is 8-amino-3,8-dideoxy-alpha-D-manno-octulosonate + CTP = CMP-8-amino-3,8-dideoxy-alpha-D-manno-oct-2-ulosonate + diphosphate. It participates in bacterial outer membrane biogenesis; lipopolysaccharide biosynthesis. Its function is as follows. Activates KDO8N (a required 8-carbon sugar) for incorporation into bacterial lipopolysaccharide in the Shewanella genus. In Shewanella piezotolerans (strain WP3 / JCM 13877), this protein is 8-amino-3,8-dideoxy-manno-octulosonate cytidylyltransferase.